The following is a 79-amino-acid chain: D-alanyl carrier protein (79 aa).

The Carrier domain maps to 1 to 77 (MDIKSEVLKI…KIIEGITELR (77 aa)). An O-(pantetheine 4'-phosphoryl)serine modification is found at Ser-35.

The protein belongs to the DltC family. 4'-phosphopantetheine is transferred from CoA to a specific serine of apo-DCP.

It is found in the cytoplasm. The protein operates within cell wall biogenesis; lipoteichoic acid biosynthesis. Its function is as follows. Carrier protein involved in the D-alanylation of lipoteichoic acid (LTA). The loading of thioester-linked D-alanine onto DltC is catalyzed by D-alanine--D-alanyl carrier protein ligase DltA. The DltC-carried D-alanyl group is further transferred to cell membrane phosphatidylglycerol (PG) by forming an ester bond, probably catalyzed by DltD. D-alanylation of LTA plays an important role in modulating the properties of the cell wall in Gram-positive bacteria, influencing the net charge of the cell wall. This chain is D-alanyl carrier protein, found in Streptococcus mutans serotype c (strain ATCC 700610 / UA159).